The chain runs to 1254 residues: Histone-lysine N-methyltransferase eggless (1254 aa).

Disordered stretches follow at residues 24–209 (ALVE…EIPR) and 228–248 (PVPR…SKTT). Basic and acidic residues-rich tracts occupy residues 40–57 (TPEK…KDLT) and 65–81 (KSQE…KDPE). A compositionally biased stretch (low complexity) spans 112 to 125 (SVELLESPLKSPSS). Residues 136-162 (LEEKEKPGPAKELEPKESEPDSKESSK) are compositionally biased toward basic and acidic residues. Positions 172–181 (ELISSPTSDD) are enriched in polar residues. Composition is skewed to basic and acidic residues over residues 182–197 (SLAK…EHGQ) and 234–243 (AMQESKETQK). A coiled-coil region spans residues 391–416 (TILQAKIERLAKKFEEVDLQLAQVQG). Tudor domains lie at 535-607 (RLPI…SEKV) and 634-691 (QCTK…KETQ). The tract at residues 734–760 (ARKSTSKSGSPASTAAPPTGSSSSSAV) is disordered. Low complexity predominate over residues 739 to 759 (SKSGSPASTAAPPTGSSSSSA). An MBD domain is found at 811 to 877 (LDSYSPLSKP…DNFDFTPDLR (67 aa)). A Pre-SET domain is found at 939–1011 (VCCDCEDDCS…NCLNRVVQHS (73 aa)). Zn(2+) is bound by residues Cys941, Cys943, Cys947, Cys953, Cys955, Cys993, Cys997, Cys999, and Cys1003. Residues 1014–1229 (MKLQVFKTSN…SGTELTWNYN (216 aa)) form the SET domain. S-adenosyl-L-methionine-binding positions include 1024–1026 (RGW), Asp1062, and Tyr1064. Over residues 1081–1090 (YESDVERADL) the composition is skewed to basic and acidic residues. The tract at residues 1081 to 1139 (YESDVERADLDHEDDNYGPDAEDDDDFRPNNYYQKKKEKLRSSRSNSSSTQNTELDSQE) is disordered. Over residues 1091 to 1106 (DHEDDNYGPDAEDDDD) the composition is skewed to acidic residues. Low complexity predominate over residues 1123-1134 (SRSNSSSTQNTE). S-adenosyl-L-methionine-binding positions include Arg1183 and 1186–1187 (NH). 4 residues coordinate Zn(2+): Cys1189, Cys1242, Cys1244, and Cys1249. Residues 1238-1254 (KVLYCQCGAQNCRVRLL) enclose the Post-SET domain.

It belongs to the class V-like SAM-binding methyltransferase superfamily. Histone-lysine methyltransferase family. Suvar3-9 subfamily.

The protein resides in the nucleus. It is found in the chromosome. It catalyses the reaction L-lysyl(9)-[histone H3] + 3 S-adenosyl-L-methionine = N(6),N(6),N(6)-trimethyl-L-lysyl(9)-[histone H3] + 3 S-adenosyl-L-homocysteine + 3 H(+). In terms of biological role, histone methyltransferase that specifically trimethylates 'Lys-9' of histone H3 in ovary. H3 'Lys-9' trimethylation represents a specific tag for epigenetic transcriptional repression by recruiting Su(var)205/HP1 to methylated histones. Plays a central role during oogenesis. This is Histone-lysine N-methyltransferase eggless (egg) from Drosophila pseudoobscura pseudoobscura (Fruit fly).